Consider the following 85-residue polypeptide: Putative transmembrane protein ORF85 (85 aa).

2 helical membrane passes run 12-32 (FPPT…KFLS) and 44-64 (LGII…GAGI).

The protein resides in the host membrane. The sequence is that of Putative transmembrane protein ORF85 from Acidianus convivator (ABV).